Here is a 526-residue protein sequence, read N- to C-terminus: Cytochrome P450 52A5 (526 aa).

Residues 18–38 (WYVIVPLAIIIYKVFDYFYVL) traverse the membrane as a helical segment. C473 contributes to the heme binding site.

This sequence belongs to the cytochrome P450 family. It depends on heme as a cofactor.

The protein resides in the membrane. Its function is as follows. Together with an NADPH cytochrome P450 the enzyme system catalyzes the terminal hydroxylation as the first step in the assimilation of alkanes and fatty acids. In Candida maltosa (Yeast), this protein is Cytochrome P450 52A5 (CYP52A5).